The following is a 535-amino-acid chain: Flavin-containing monooxygenase 2 (535 aa).

Residue alanine 2 is modified to N-acetylalanine. FAD is bound by residues 9-13, glutamate 32, 40-41, and 61-62; these read GAGVS, VW, and NT. Residues 60–61 and 195–198 each bind NADP(+); these read TN and SGSD. Lysine 492 participates in a covalent cross-link: Glycyl lysine isopeptide (Lys-Gly) (interchain with G-Cter in SUMO). The helical transmembrane segment at 510-530 threads the bilayer; it reads FSVSFLLKILGLLAVVVAFFC.

Belongs to the FMO family. FAD serves as cofactor. It depends on Mg(2+) as a cofactor. As to expression, expressed in lung (at protein level). Expressed predominantly in lung, and at a much lesser extent in kidney. Also expressed in fetal lung, but not in liver, kidney and brain.

It localises to the microsome membrane. The protein resides in the endoplasmic reticulum membrane. Catalyzes the oxidative metabolism of numerous xenobiotics, including mainly therapeutic drugs and insecticides that contain a soft nucleophile, most commonly nitrogen and sulfur and participates to their bioactivation. Specifically catalyzes S-oxygenation of sulfur derived compounds such as thioureas-derived compounds, thioetherorganophosphates to their sulfenic acid. In vitro, catalyzes S-oxygenation of the second-line antitubercular drugs thiacetazone (TAZ) and ethionamide (ETA), forming a sulfinic acid and a carbodiimide via a postulated sulfenic acid intermediate. Also catalyzes S-oxygenation of the thioether-containing organophosphate insecticides, phorate and disulfoton. This chain is Flavin-containing monooxygenase 2, found in Homo sapiens (Human).